We begin with the raw amino-acid sequence, 367 residues long: Anthranilate phosphoribosyltransferase (367 aa).

Over residues 1–21 (MALSSESSAASAARRPSGGPA) the composition is skewed to low complexity. The tract at residues 1–24 (MALSSESSAASAARRPSGGPATSW) is disordered. 5-phospho-alpha-D-ribose 1-diphosphate is bound by residues Gly-104, 107–108 (GD), Thr-112, 114–117 (NLST), 132–140 (KHGNRAASS), and Gly-144. Gly-104 lines the anthranilate pocket. A Mg(2+)-binding site is contributed by Ser-116. Asn-135 is an anthranilate binding site. Arg-190 contacts anthranilate. Mg(2+)-binding residues include Asp-248 and Glu-249.

This sequence belongs to the anthranilate phosphoribosyltransferase family. In terms of assembly, homodimer. Requires Mg(2+) as cofactor.

The catalysed reaction is N-(5-phospho-beta-D-ribosyl)anthranilate + diphosphate = 5-phospho-alpha-D-ribose 1-diphosphate + anthranilate. It participates in amino-acid biosynthesis; L-tryptophan biosynthesis; L-tryptophan from chorismate: step 2/5. Catalyzes the transfer of the phosphoribosyl group of 5-phosphorylribose-1-pyrophosphate (PRPP) to anthranilate to yield N-(5'-phosphoribosyl)-anthranilate (PRA). This chain is Anthranilate phosphoribosyltransferase, found in Mycolicibacterium paratuberculosis (strain ATCC BAA-968 / K-10) (Mycobacterium paratuberculosis).